The chain runs to 724 residues: Probable metal-nicotianamine transporter YSL13 (724 aa).

Residues 1-54 (MATVPTPSEAHGGATPTAADVEMVEASELRRRGKPSGDRATGPSRDGAAAAAEE) form a disordered region. The next 14 membrane-spanning stretches (helical) occupy residues 80–100 (AFVV…KLNL), 103–123 (GIIP…VRLW), 148–168 (CVVA…ILSM), 190–210 (LGWI…GLVP), 252–272 (LGIF…YTAT), 310–330 (IVNV…WPLI), 355–375 (VFIA…KMII), 423–443 (IPWY…IGTV), 455–475 (ILVA…GTGL), 487–507 (LAIF…LAGL), 541–561 (FVSQ…VFWL), 603–623 (LNLC…RDLV), 640–660 (FYIG…LFVW), and 675–695 (VASG…VLAL).

It belongs to the YSL (TC 2.A.67.2) family. As to expression, expressed in leaves and at low levels in root cortex.

Its subcellular location is the membrane. In terms of biological role, may be involved in the transport of nicotianamine-chelated metals. The protein is Probable metal-nicotianamine transporter YSL13 (YSL13) of Oryza sativa subsp. japonica (Rice).